The following is a 134-amino-acid chain: Loki profilin-1 (134 aa).

The interval leucine 55–isoleucine 62 is loki loop.

It belongs to the Asgard profilin family.

It is found in the cytoplasm. The protein localises to the cytoskeleton. Inhibition of rabbit actin polymerization is reduced by phosphatidylinositol-(4,5)-P2(1,2-dipalmitoyl), a soluble form of the phospholipid phosphatidylinositol, suggesting an unknown lipid might regulate actin-profilin interaction in vivo. Functionally, binds to actin and affects the structure of the cytoskeleton. At high concentrations inhibits spontaneous rabbit actin nucleation. This strongly suggests this archaea has a profilin-regulated actin system, and actin-type genes can be identified in this organism. The protein is Loki profilin-1 of Lokiarchaeum sp. (strain GC14_75).